Consider the following 368-residue polypeptide: MDISFQIQDAVASVIRAPLASPFRIATGQHDELENVFLKLTTRDGVSGYGEAAVASHITGETVPGTLANLQNAAAALRGQTVDDAESACRQFAAAFAGNHAGLAALEMALLDLSSRVRGIPFYRLFAPVAALEPRLAFSTDITVVIGSLDEARATAREFASRGFKAFKIKIGRDEQLDLARVLAVHEIAPDSQIILDANMGFSAGSMLAFLDRLAAKGVRPVLLEQPVPKMDWDGLSEITAALTGSETLVCADESVGSLADARRAIDSNAVSAINVKFMKSGILEGAEIARLAASRGIRLMLGAMMESALAVTASAHFAAGLACFDYLDMDTTFFLKGELAHSPYLDEHGRFDLHDAGPGIGVEPRFS.

Substrate contacts are provided by residues T143 and 168-170 (KIK). 3 residues coordinate Mg(2+): D197, E225, and D253. Substrate-binding positions include K277 and 329–331 (DMD).

The protein belongs to the mandelate racemase/muconate lactonizing enzyme family. It depends on Mg(2+) as a cofactor.

Catalyzes the epimerization of various hydrophobic dipeptides, such as L-Ala-L-Phe. Has epimerase activity with L-Ala-L-Thr, L-Ala-L-Met, L-Ala-L-Tyr, as well as L-Phe-L-Met, L-Phe-L-Ser and L-Phe-L-Thr (in vitro). The protein is Hydrophobic dipeptide epimerase of Citrifermentans bemidjiense (strain ATCC BAA-1014 / DSM 16622 / JCM 12645 / Bem) (Geobacter bemidjiensis).